The primary structure comprises 290 residues: Type II restriction enzyme MjaIII (290 aa).

This sequence belongs to the DpnII type II restriction endonuclease family.

The catalysed reaction is Endonucleolytic cleavage of DNA to give specific double-stranded fragments with terminal 5'-phosphates.. In terms of biological role, a P subtype restriction enzyme that recognizes the double-stranded sequence 5'-GATC-3'; the cleavage site is unknown. The protein is Type II restriction enzyme MjaIII (mjaIIIR) of Methanocaldococcus jannaschii (strain ATCC 43067 / DSM 2661 / JAL-1 / JCM 10045 / NBRC 100440) (Methanococcus jannaschii).